A 476-amino-acid chain; its full sequence is Exodeoxyribonuclease 7 large subunit (476 aa).

This sequence belongs to the XseA family. In terms of assembly, heterooligomer composed of large and small subunits.

The protein resides in the cytoplasm. The enzyme catalyses Exonucleolytic cleavage in either 5'- to 3'- or 3'- to 5'-direction to yield nucleoside 5'-phosphates.. Bidirectionally degrades single-stranded DNA into large acid-insoluble oligonucleotides, which are then degraded further into small acid-soluble oligonucleotides. The protein is Exodeoxyribonuclease 7 large subunit of Bartonella bacilliformis (strain ATCC 35685 / KC583 / Herrer 020/F12,63).